The sequence spans 296 residues: Splicing factor U2af small subunit A (296 aa).

Residues 12 to 40 (EKDRVNCPFYFKIGACRHGDRCSRLHNRP) form a C3H1-type 1 zinc finger. The region spanning 44-146 (PTLLLSNMYQ…RPIIADFSPV (103 aa)) is the RRM domain. The segment at 148–175 (DFREATCRQYEENNCNRGGYCNFMHVKL) adopts a C3H1-type 2 zinc-finger fold. Basic residues predominate over residues 191-202 (SYRRGSRSRSRS). The interval 191-296 (SYRRGSRSRS…EREEKEEGGA (106 aa)) is disordered. 2 stretches are compositionally biased toward basic and acidic residues: residues 209–254 (NKRD…DGSR) and 272–296 (EGSE…EGGA).

This sequence belongs to the splicing factor SR family. As to quaternary structure, component of the spliceosome. Homo- and heterodimer. Interacts with U2AF35B, RNU1 and SR45.

The protein localises to the nucleus speckle. Functionally, necessary for the splicing of pre-mRNA. Probably active at the 3' splice sites. This Arabidopsis thaliana (Mouse-ear cress) protein is Splicing factor U2af small subunit A.